Reading from the N-terminus, the 327-residue chain is Beta-1,4-galactosyltransferase 7 (327 aa).

Over Met1 to Ser30 the chain is Cytoplasmic. A helical; Signal-anchor for type II membrane protein transmembrane segment spans residues Val31 to Leu51. Over Ser52–Ser327 the chain is Lumenal. The interval Gly63–Asp87 is disordered. Residues Pro100 to Arg104 and Phe139 to Arg141 contribute to the UDP-alpha-D-galactose site. An N-linked (GlcNAc...) asparagine glycan is attached at Asn154. UDP-alpha-D-galactose is bound by residues Val164–Asp165, Tyr194, and Trp224. Asp165 lines the Mn(2+) pocket. Arg226 to Asp229 contacts N-acetyl-D-glucosamine. His257 serves as a coordination point for Mn(2+). Residues His257–His259 and Arg266 contribute to the UDP-alpha-D-galactose site. A disulfide bridge connects residues Cys316 and Cys324.

This sequence belongs to the glycosyltransferase 7 family. It depends on Mn(2+) as a cofactor. In terms of tissue distribution, high expression in heart, pancreas and liver, medium in placenta and kidney, low in brain, skeletal muscle and lung.

It is found in the golgi apparatus. The protein localises to the golgi stack membrane. The enzyme catalyses 3-O-(beta-D-xylosyl)-L-seryl-[protein] + UDP-alpha-D-galactose = 3-O-(beta-D-galactosyl-(1-&gt;4)-beta-D-xylosyl)-L-seryl-[protein] + UDP + H(+). The protein operates within protein modification; protein glycosylation. Required for the biosynthesis of the tetrasaccharide linkage region of proteoglycans, especially for small proteoglycans in skin fibroblasts. This chain is Beta-1,4-galactosyltransferase 7 (B4GALT7), found in Homo sapiens (Human).